A 167-amino-acid chain; its full sequence is Mediator of RNA polymerase II transcription subunit 10 (167 aa).

The segment at 53-88 (LSTHTKPQPPSQDEEQKEKQDDTPEGSANDPLLRDI) is disordered.

This sequence belongs to the Mediator complex subunit 10 family. Component of the Mediator complex.

It localises to the nucleus. Functionally, component of the Mediator complex, a coactivator involved in the regulated transcription of nearly all RNA polymerase II-dependent genes. Mediator functions as a bridge to convey information from gene-specific regulatory proteins to the basal RNA polymerase II transcription machinery. Mediator is recruited to promoters by direct interactions with regulatory proteins and serves as a scaffold for the assembly of a functional preinitiation complex with RNA polymerase II and the general transcription factors. The polypeptide is Mediator of RNA polymerase II transcription subunit 10 (nut2) (Neosartorya fischeri (strain ATCC 1020 / DSM 3700 / CBS 544.65 / FGSC A1164 / JCM 1740 / NRRL 181 / WB 181) (Aspergillus fischerianus)).